Consider the following 281-residue polypeptide: MADAASQPIYWSELGLSPGIDLGFFTLRFYSLAYIVGIVLAYWHLGKMIKAPGAPMAQSHADDLFFYCTLGVIFGGRIGYVLFYRPDLLGTLDMFKVWEGGMSFHGGVIGVVLAILFVSWRGKLNWLRVCDYIAVNVPFGMFLGRMANFVNGELYGRPTDVSWAMIFPTDPDQVARHPSQLYQAGLEGLLMMAVMLLLFWQTRARWRPGVLVGVFTIGIAGARFVNEFFRAPDAHLADVVRDTGLSQGQWLSIPMILVGLAVVVYALTRKTKGTPEKPASA.

Transmembrane regions (helical) follow at residues 29–49 (FYSLAYIVGIVLAYWHLGKMI), 64–84 (LFFYCTLGVIFGGRIGYVLFY), 100–120 (GGMSFHGGVIGVVLAILFVSW), and 124–144 (LNWLRVCDYIAVNVPFGMFLG). Arg145 contacts a 1,2-diacyl-sn-glycero-3-phospho-(1'-sn-glycerol). The next 3 membrane-spanning stretches (helical) occupy residues 180–200 (QLYQAGLEGLLMMAVMLLLFW), 209–229 (GVLVGVFTIGIAGARFVNEFF), and 248–268 (GQWLSIPMILVGLAVVVYALT).

It belongs to the Lgt family.

It is found in the cell inner membrane. The catalysed reaction is L-cysteinyl-[prolipoprotein] + a 1,2-diacyl-sn-glycero-3-phospho-(1'-sn-glycerol) = an S-1,2-diacyl-sn-glyceryl-L-cysteinyl-[prolipoprotein] + sn-glycerol 1-phosphate + H(+). The protein operates within protein modification; lipoprotein biosynthesis (diacylglyceryl transfer). In terms of biological role, catalyzes the transfer of the diacylglyceryl group from phosphatidylglycerol to the sulfhydryl group of the N-terminal cysteine of a prolipoprotein, the first step in the formation of mature lipoproteins. The protein is Phosphatidylglycerol--prolipoprotein diacylglyceryl transferase of Erythrobacter litoralis (strain HTCC2594).